Reading from the N-terminus, the 305-residue chain is Aspartate carbamoyltransferase catalytic subunit (305 aa).

Residues Arg58 and Thr59 each contribute to the carbamoyl phosphate site. An L-aspartate-binding site is contributed by Lys86. Arg108, His136, and Gln139 together coordinate carbamoyl phosphate. Arg169 and Arg223 together coordinate L-aspartate. 2 residues coordinate carbamoyl phosphate: Gly264 and Pro265.

It belongs to the aspartate/ornithine carbamoyltransferase superfamily. ATCase family. In terms of assembly, heterododecamer (2C3:3R2) of six catalytic PyrB chains organized as two trimers (C3), and six regulatory PyrI chains organized as three dimers (R2).

The enzyme catalyses carbamoyl phosphate + L-aspartate = N-carbamoyl-L-aspartate + phosphate + H(+). Its pathway is pyrimidine metabolism; UMP biosynthesis via de novo pathway; (S)-dihydroorotate from bicarbonate: step 2/3. Catalyzes the condensation of carbamoyl phosphate and aspartate to form carbamoyl aspartate and inorganic phosphate, the committed step in the de novo pyrimidine nucleotide biosynthesis pathway. The polypeptide is Aspartate carbamoyltransferase catalytic subunit (Syntrophobacter fumaroxidans (strain DSM 10017 / MPOB)).